The chain runs to 116 residues: POU domain, class 4, transcription factor 1 (116 aa).

The region spanning 1–54 (VTQADVGSALANLKIPGVGSLSQSTICRFESLTLSHNNMIALKPILQAWLEEAE) is the POU-specific domain. Positions 56 to 79 (AQREKMNKPELFNGGEKKRKRTSI) are disordered. Positions 72–116 (KKRKRTSIAAPEKRSLEAYFAVQPRPSSEKIAAIAEKLDLKKNVV) form a DNA-binding region, homeobox.

It belongs to the POU transcription factor family. Class-4 subfamily.

It is found in the nucleus. It localises to the cytoplasm. Multifunctional transcription factor with different regions mediating its different effects. Acts by binding (via its C-terminal domain) to sequences related to the consensus octamer motif 5'-ATGCAAAT-3' in the regulatory regions of its target genes. Regulates the expression of specific genes involved in differentiation and survival within a subset of neuronal lineages. It has been shown that activation of some of these genes requires its N-terminal domain, maybe through a neuronal-specific cofactor. The chain is POU domain, class 4, transcription factor 1 (POU4F1) from Gallus gallus (Chicken).